A 164-amino-acid chain; its full sequence is Phosphopantetheine adenylyltransferase (164 aa).

S9 provides a ligand contact to substrate. ATP-binding positions include 9–10 (SF) and H17. Positions 41, 73, and 87 each coordinate substrate. ATP-binding positions include 88 to 90 (GLR), E98, and 122 to 128 (YSYLSSS).

This sequence belongs to the bacterial CoaD family. In terms of assembly, homohexamer. The cofactor is Mg(2+).

The protein localises to the cytoplasm. It catalyses the reaction (R)-4'-phosphopantetheine + ATP + H(+) = 3'-dephospho-CoA + diphosphate. The protein operates within cofactor biosynthesis; coenzyme A biosynthesis; CoA from (R)-pantothenate: step 4/5. In terms of biological role, reversibly transfers an adenylyl group from ATP to 4'-phosphopantetheine, yielding dephospho-CoA (dPCoA) and pyrophosphate. The polypeptide is Phosphopantetheine adenylyltransferase (Rhodococcus erythropolis (strain PR4 / NBRC 100887)).